The sequence spans 217 residues: Uracil-DNA glycosylase (217 aa).

Catalysis depends on D62, which acts as the Proton acceptor.

It belongs to the uracil-DNA glycosylase (UDG) superfamily. UNG family.

It is found in the cytoplasm. The catalysed reaction is Hydrolyzes single-stranded DNA or mismatched double-stranded DNA and polynucleotides, releasing free uracil.. Functionally, excises uracil residues from the DNA which can arise as a result of misincorporation of dUMP residues by DNA polymerase or due to deamination of cytosine. The chain is Uracil-DNA glycosylase from Streptococcus pyogenes serotype M6 (strain ATCC BAA-946 / MGAS10394).